The following is a 135-amino-acid chain: Ribonuclease P protein component (135 aa).

Positions 115–135 are disordered; it reads ETEPVSPVSPTSLPQNERGSP. Positions 122–135 are enriched in polar residues; that stretch reads VSPTSLPQNERGSP.

The protein belongs to the RnpA family. In terms of assembly, consists of a catalytic RNA component (M1 or rnpB) and a protein subunit.

It carries out the reaction Endonucleolytic cleavage of RNA, removing 5'-extranucleotides from tRNA precursor.. Its function is as follows. RNaseP catalyzes the removal of the 5'-leader sequence from pre-tRNA to produce the mature 5'-terminus. It can also cleave other RNA substrates such as 4.5S RNA. The protein component plays an auxiliary but essential role in vivo by binding to the 5'-leader sequence and broadening the substrate specificity of the ribozyme. The polypeptide is Ribonuclease P protein component (Chloroflexus aggregans (strain MD-66 / DSM 9485)).